The primary structure comprises 186 residues: ATP synthase subunit delta (186 aa).

Belongs to the ATPase delta chain family. In terms of assembly, F-type ATPases have 2 components, F(1) - the catalytic core - and F(0) - the membrane proton channel. F(1) has five subunits: alpha(3), beta(3), gamma(1), delta(1), epsilon(1). F(0) has three main subunits: a(1), b(2) and c(10-14). The alpha and beta chains form an alternating ring which encloses part of the gamma chain. F(1) is attached to F(0) by a central stalk formed by the gamma and epsilon chains, while a peripheral stalk is formed by the delta and b chains.

It is found in the cell inner membrane. F(1)F(0) ATP synthase produces ATP from ADP in the presence of a proton or sodium gradient. F-type ATPases consist of two structural domains, F(1) containing the extramembraneous catalytic core and F(0) containing the membrane proton channel, linked together by a central stalk and a peripheral stalk. During catalysis, ATP synthesis in the catalytic domain of F(1) is coupled via a rotary mechanism of the central stalk subunits to proton translocation. Functionally, this protein is part of the stalk that links CF(0) to CF(1). It either transmits conformational changes from CF(0) to CF(1) or is implicated in proton conduction. The chain is ATP synthase subunit delta from Wolbachia sp. subsp. Drosophila simulans (strain wRi).